The following is a 283-amino-acid chain: Zinc-finger homeodomain protein 8 (283 aa).

The segment at 23 to 68 adopts a ZF-HD dimerization-type; degenerate zinc-finger fold; sequence YKECMRNHAAAMGGQAFDGCGEYMPASPDSLKCAACGCHRSFHRRA. Disordered stretches follow at residues 131 to 171 and 244 to 283; these read AGRA…TKFT and GLGTGLGTGISGDGDGDDDDTDDSPPRAAVSSPSPSPISV. Positions 148–161 are enriched in gly residues; sequence GSAGGSGSGGGGIF. The segment at residues 163-226 is a DNA-binding region (homeobox); sequence RKRFRTKFTP…NHKNQLASSP (64 aa). A compositionally biased stretch (gly residues) spans 244–256; that stretch reads GLGTGLGTGISGD. Positions 257-266 are enriched in acidic residues; that stretch reads GDGDDDDTDD. Residues 269–283 are compositionally biased toward low complexity; the sequence is PRAAVSSPSPSPISV.

Homo- and heterodimer with other ZFHD proteins.

It is found in the nucleus. Putative transcription factor. The protein is Zinc-finger homeodomain protein 8 (ZHD8) of Oryza sativa subsp. japonica (Rice).